Reading from the N-terminus, the 118-residue chain is Non-specific lipid-transfer protein 1 (118 aa).

Positions 1–20 are cleaved as a signal peptide; sequence MARLAVAIAVVAAVVVVLAA. 4 disulfides stabilise this stretch: cysteine 29-cysteine 77, cysteine 39-cysteine 54, cysteine 55-cysteine 100, and cysteine 75-cysteine 114.

The protein belongs to the plant LTP family.

Its function is as follows. Plant non-specific lipid-transfer proteins transfer phospholipids as well as galactolipids across membranes. May play a role in wax or cutin deposition in the cell walls of expanding epidermal cells and certain secretory tissues. In Sorghum bicolor (Sorghum), this protein is Non-specific lipid-transfer protein 1 (LTP1).